Here is a 579-residue protein sequence, read N- to C-terminus: XK-related protein 7 (579 aa).

A compositionally biased stretch (low complexity) spans 1-18; sequence MAAKSDGAAASAGPDPEG. The segment at 1 to 40 is disordered; sequence MAAKSDGAAASAGPDPEGAAGGARGSAGGRGEAAAAAGPP. The segment covering 19–31 has biased composition (gly residues); it reads AAGGARGSAGGRG. Transmembrane regions (helical) follow at residues 59-79 and 89-109; these read WVLC…WLAA and YFSL…LLSF. Residues 146–165 are disordered; the sequence is GAFRTKEGSPEPGPQPAPSS. A run of 5 helical transmembrane segments spans residues 260–280, 314–334, 355–375, 384–404, and 415–435; these read LLPA…LASY, GLAF…CIVG, GEEI…WFNV, MTLY…FWYS, and LIMV…MCVY. The disordered stretch occupies residues 466 to 510; it reads ADAITSPPRSLPRTTGAERDGASAGERAGTPTPPVFQVRPGLPPT.

Belongs to the XK family.

It localises to the cell membrane. In Pan troglodytes (Chimpanzee), this protein is XK-related protein 7 (XKR7).